Consider the following 329-residue polypeptide: Phosphate acyltransferase (329 aa).

Belongs to the PlsX family. In terms of assembly, homodimer. Probably interacts with PlsY.

The protein resides in the cytoplasm. It carries out the reaction a fatty acyl-[ACP] + phosphate = an acyl phosphate + holo-[ACP]. The protein operates within lipid metabolism; phospholipid metabolism. Catalyzes the reversible formation of acyl-phosphate (acyl-PO(4)) from acyl-[acyl-carrier-protein] (acyl-ACP). This enzyme utilizes acyl-ACP as fatty acyl donor, but not acyl-CoA. The sequence is that of Phosphate acyltransferase from Sulfurovum sp. (strain NBC37-1).